The chain runs to 341 residues: Probable UDP-glucuronate 4-epimerase (341 aa).

The Proton acceptor role is filled by Tyr-152.

This sequence belongs to the NAD(P)-dependent epimerase/dehydratase family. Requires NAD(+) as cofactor.

It carries out the reaction UDP-alpha-D-glucuronate = UDP-alpha-D-galacturonate. This is Probable UDP-glucuronate 4-epimerase from Rhizobium meliloti (strain 1021) (Ensifer meliloti).